The chain runs to 122 residues: UPF0102 protein DIP1513 (122 aa).

It belongs to the UPF0102 family.

In Corynebacterium diphtheriae (strain ATCC 700971 / NCTC 13129 / Biotype gravis), this protein is UPF0102 protein DIP1513.